The chain runs to 588 residues: Aspartate--tRNA ligase (588 aa).

Glu172 serves as a coordination point for L-aspartate. Residues 196 to 199 (QLFK) are aspartate. An L-aspartate-binding site is contributed by Arg218. ATP is bound by residues 218 to 220 (RDE) and Gln227. L-aspartate is bound at residue His449. Glu483 is a binding site for ATP. Arg490 contributes to the L-aspartate binding site. 535 to 538 (GLDR) serves as a coordination point for ATP.

It belongs to the class-II aminoacyl-tRNA synthetase family. Type 1 subfamily. In terms of assembly, homodimer.

Its subcellular location is the cytoplasm. The catalysed reaction is tRNA(Asp) + L-aspartate + ATP = L-aspartyl-tRNA(Asp) + AMP + diphosphate. In terms of biological role, catalyzes the attachment of L-aspartate to tRNA(Asp) in a two-step reaction: L-aspartate is first activated by ATP to form Asp-AMP and then transferred to the acceptor end of tRNA(Asp). This Pasteurella multocida (strain Pm70) protein is Aspartate--tRNA ligase.